Consider the following 61-residue polypeptide: Small ribosomal subunit protein uS14 (61 aa).

Zn(2+)-binding residues include Cys24, Cys27, Cys40, and Cys43.

The protein belongs to the universal ribosomal protein uS14 family. Zinc-binding uS14 subfamily. Part of the 30S ribosomal subunit. Contacts proteins S3 and S10. Zn(2+) is required as a cofactor.

Binds 16S rRNA, required for the assembly of 30S particles and may also be responsible for determining the conformation of the 16S rRNA at the A site. The protein is Small ribosomal subunit protein uS14 of Clostridium botulinum (strain ATCC 19397 / Type A).